A 313-amino-acid chain; its full sequence is Ribosomal RNA small subunit methyltransferase H (313 aa).

S-adenosyl-L-methionine contacts are provided by residues 35-37 (GGH), Asp55, Phe79, Asp101, and Gln108.

Belongs to the methyltransferase superfamily. RsmH family.

Its subcellular location is the cytoplasm. The catalysed reaction is cytidine(1402) in 16S rRNA + S-adenosyl-L-methionine = N(4)-methylcytidine(1402) in 16S rRNA + S-adenosyl-L-homocysteine + H(+). Specifically methylates the N4 position of cytidine in position 1402 (C1402) of 16S rRNA. The polypeptide is Ribosomal RNA small subunit methyltransferase H (Salmonella agona (strain SL483)).